The sequence spans 151 residues: Aspartate carbamoyltransferase regulatory chain (151 aa).

Zn(2+) is bound by residues cysteine 107, cysteine 112, cysteine 135, and cysteine 138.

Belongs to the PyrI family. As to quaternary structure, contains catalytic and regulatory chains. Requires Zn(2+) as cofactor.

Involved in allosteric regulation of aspartate carbamoyltransferase. The protein is Aspartate carbamoyltransferase regulatory chain of Thermococcus onnurineus (strain NA1).